A 213-amino-acid polypeptide reads, in one-letter code: UPF0111 protein TM_0914 (213 aa).

It belongs to the UPF0111 family.

This Thermotoga maritima (strain ATCC 43589 / DSM 3109 / JCM 10099 / NBRC 100826 / MSB8) protein is UPF0111 protein TM_0914.